A 575-amino-acid chain; its full sequence is Major outer membrane protein MspA (575 aa).

The signal sequence occupies residues 1 to 19 (MKKALVFFVALAMIGSVFA).

The protein localises to the cell outer membrane. Major component of the outer membrane sheath. The sequence is that of Major outer membrane protein MspA (mspA) from Treponema maltophilum.